A 517-amino-acid chain; its full sequence is Pentatricopeptide repeat-containing protein At1g77360, mitochondrial (517 aa).

A mitochondrion-targeting transit peptide spans 1-59 (MKRFRIRSVDFRQLVNFFSFMRWECSSSATVWVRFNMTIRIINRQSRFCCKSFLSARLY). PPR repeat units follow at residues 133–163 (SVRA…MRKK), 167–201 (NVET…DLPP), 202–232 (NLVA…MRDR), 236–270 (DSKT…GCHP), 271–305 (DIVT…ICKP), 306–340 (TTFI…GMKA), 341–375 (DVAV…GVTP), 376–406 (NSKS…MIKV), 410–444 (DADT…GVFP), and 445–479 (SMHT…GIRP).

This sequence belongs to the PPR family. P subfamily.

Its subcellular location is the mitochondrion. In Arabidopsis thaliana (Mouse-ear cress), this protein is Pentatricopeptide repeat-containing protein At1g77360, mitochondrial.